Here is a 196-residue protein sequence, read N- to C-terminus: Putative 3-methyladenine DNA glycosylase (196 aa).

This sequence belongs to the DNA glycosylase MPG family.

This chain is Putative 3-methyladenine DNA glycosylase, found in Chlorobium phaeobacteroides (strain DSM 266 / SMG 266 / 2430).